A 380-amino-acid polypeptide reads, in one-letter code: 1-deoxy-D-xylulose 5-phosphate reductoisomerase (380 aa).

Residues threonine 10, glycine 11, serine 12, isoleucine 13, glycine 36, arginine 37, asparagine 38, and asparagine 120 each contribute to the NADPH site. Lysine 121 is a binding site for 1-deoxy-D-xylulose 5-phosphate. Glutamate 122 lines the NADPH pocket. Aspartate 146 is a binding site for Mn(2+). 1-deoxy-D-xylulose 5-phosphate contacts are provided by serine 147, glutamate 148, serine 172, and histidine 195. A Mn(2+)-binding site is contributed by glutamate 148. Glycine 201 is a binding site for NADPH. 1-deoxy-D-xylulose 5-phosphate contacts are provided by serine 208, asparagine 213, lysine 214, and glutamate 217. Glutamate 217 contributes to the Mn(2+) binding site.

The protein belongs to the DXR family. The cofactor is Mg(2+). Mn(2+) is required as a cofactor.

The catalysed reaction is 2-C-methyl-D-erythritol 4-phosphate + NADP(+) = 1-deoxy-D-xylulose 5-phosphate + NADPH + H(+). It functions in the pathway isoprenoid biosynthesis; isopentenyl diphosphate biosynthesis via DXP pathway; isopentenyl diphosphate from 1-deoxy-D-xylulose 5-phosphate: step 1/6. In terms of biological role, catalyzes the NADPH-dependent rearrangement and reduction of 1-deoxy-D-xylulose-5-phosphate (DXP) to 2-C-methyl-D-erythritol 4-phosphate (MEP). The sequence is that of 1-deoxy-D-xylulose 5-phosphate reductoisomerase from Listeria innocua serovar 6a (strain ATCC BAA-680 / CLIP 11262).